The chain runs to 77 residues: Large ribosomal subunit protein bL31 (77 aa).

This sequence belongs to the bacterial ribosomal protein bL31 family. Type A subfamily. As to quaternary structure, part of the 50S ribosomal subunit.

In terms of biological role, binds the 23S rRNA. This Paramagnetospirillum magneticum (strain ATCC 700264 / AMB-1) (Magnetospirillum magneticum) protein is Large ribosomal subunit protein bL31.